The following is a 270-amino-acid chain: NAD kinase (270 aa).

Asp-61 serves as the catalytic Proton acceptor. NAD(+) contacts are provided by residues 61-62 (DG), 133-134 (NE), Arg-144, Arg-163, Asp-165, and 176-181 (TAYNLS).

The protein belongs to the NAD kinase family. Requires a divalent metal cation as cofactor.

It is found in the cytoplasm. It catalyses the reaction NAD(+) + ATP = ADP + NADP(+) + H(+). Functionally, involved in the regulation of the intracellular balance of NAD and NADP, and is a key enzyme in the biosynthesis of NADP. Catalyzes specifically the phosphorylation on 2'-hydroxyl of the adenosine moiety of NAD to yield NADP. The protein is NAD kinase of Natronomonas pharaonis (strain ATCC 35678 / DSM 2160 / CIP 103997 / JCM 8858 / NBRC 14720 / NCIMB 2260 / Gabara) (Halobacterium pharaonis).